The chain runs to 404 residues: Putative Peroxidase 48 (404 aa).

Positions 1-18 are cleaved as a signal peptide; sequence MRFLGDYKFALLTCSVIA. Disulfide bonds link Cys77–Cys156, Cys110–Cys115, Cys162–Cys397, and Cys241–Cys273. The active-site Proton acceptor is His108. Residues Asp109, Ile112, Gly114, Asp116, and Ser118 each contribute to the Ca(2+) site. Residue Asn136 is glycosylated (N-linked (GlcNAc...) asparagine). A substrate-binding site is contributed by Pro204. Heme b is bound at residue His234. Ca(2+) is bound at residue Ser235. N-linked (GlcNAc...) asparagine glycosylation is present at Asn250. A disordered region spans residues 276-307; that stretch reads SVSTSSPSAPPDIGLPPSLPASDSENSYGMSS. Over residues 283–294 the composition is skewed to pro residues; sequence SAPPDIGLPPSL. A Ca(2+)-binding site is contributed by Asp287. The segment covering 296-307 has biased composition (polar residues); sequence ASDSENSYGMSS.

This sequence belongs to the peroxidase family. Classical plant (class III) peroxidase subfamily. The cofactor is heme b. It depends on Ca(2+) as a cofactor.

The protein localises to the secreted. The catalysed reaction is 2 a phenolic donor + H2O2 = 2 a phenolic radical donor + 2 H2O. Its function is as follows. Removal of H(2)O(2), oxidation of toxic reductants, biosynthesis and degradation of lignin, suberization, auxin catabolism, response to environmental stresses such as wounding, pathogen attack and oxidative stress. These functions might be dependent on each isozyme/isoform in each plant tissue. This is Putative Peroxidase 48 (PER48) from Arabidopsis thaliana (Mouse-ear cress).